The sequence spans 386 residues: Enoyl-[acyl-carrier-protein] reductase 1, mitochondrial (386 aa).

Residues 1-22 (MYSVLKQSIRPRLLATHNQFRT) constitute a mitochondrion transit peptide. The Proton donor role is filled by Y79. NADP(+) is bound by residues N172, 199–202 (TSAV), 222–224 (RDR), 296–299 (YGGM), 321–323 (FWV), and K381.

This sequence belongs to the zinc-containing alcohol dehydrogenase family. Quinone oxidoreductase subfamily. As to quaternary structure, homodimer and heterodimer with ETR2.

It localises to the mitochondrion. The enzyme catalyses a 2,3-saturated acyl-[ACP] + NADP(+) = a (2E)-enoyl-[ACP] + NADPH + H(+). It catalyses the reaction (2E,4E)-hexadienoyl-CoA + NADPH + H(+) = (4E)-hexenoyl-CoA + NADP(+). The catalysed reaction is (2E)-hexenoyl-CoA + NADPH + H(+) = hexanoyl-CoA + NADP(+). Catalyzes the NADPH-dependent reduction of trans-2-enoyl thioesters in mitochondrial fatty acid synthesis (fatty acid synthesis type II). Fatty acid chain elongation in mitochondria uses acyl carrier protein (ACP) as an acyl group carrier, but the enzyme accepts both ACP and CoA thioesters as substrates in vitro. Required for respiration and the maintenance of the mitochondrial compartment. The polypeptide is Enoyl-[acyl-carrier-protein] reductase 1, mitochondrial (ETR1) (Candida tropicalis (Yeast)).